The primary structure comprises 118 residues: Large ribosomal subunit protein bL19 (118 aa).

The protein belongs to the bacterial ribosomal protein bL19 family.

This protein is located at the 30S-50S ribosomal subunit interface and may play a role in the structure and function of the aminoacyl-tRNA binding site. In Helicobacter pylori (strain J99 / ATCC 700824) (Campylobacter pylori J99), this protein is Large ribosomal subunit protein bL19 (rplS).